A 312-amino-acid chain; its full sequence is Methionyl-tRNA formyltransferase (312 aa).

A (6S)-5,6,7,8-tetrahydrofolate-binding site is contributed by 111–114; the sequence is SLLP.

The protein belongs to the Fmt family.

The enzyme catalyses L-methionyl-tRNA(fMet) + (6R)-10-formyltetrahydrofolate = N-formyl-L-methionyl-tRNA(fMet) + (6S)-5,6,7,8-tetrahydrofolate + H(+). Attaches a formyl group to the free amino group of methionyl-tRNA(fMet). The formyl group appears to play a dual role in the initiator identity of N-formylmethionyl-tRNA by promoting its recognition by IF2 and preventing the misappropriation of this tRNA by the elongation apparatus. This is Methionyl-tRNA formyltransferase from Rhodopseudomonas palustris (strain HaA2).